Consider the following 484-residue polypeptide: Suppressor of fused homolog (484 aa).

The interval 1–21 (MAELRPSVAPGPAAPPASGPS) is disordered. The span at 12–21 (PAAPPASGPS) shows a compositional bias: pro residues. Residue K257 forms a Glycyl lysine isopeptide (Lys-Gly) (interchain with G-Cter in ubiquitin) linkage. Positions 279 to 360 (SRPPEDEEDS…SSTAIIPHEL (82 aa)) are disordered. Phosphoserine is present on S301. K303 is modified (N6-acetyllysine). K321 participates in a covalent cross-link: Glycyl lysine isopeptide (Lys-Gly) (interchain with G-Cter in SUMO2). Residues 336–347 (THDRAPSRKDSL) are compositionally biased toward basic and acidic residues. Residues S342, S346, and S352 each carry the phosphoserine modification. T353 carries the post-translational modification Phosphothreonine. Residue S481 is modified to Phosphoserine.

Belongs to the SUFU family. In terms of assembly, may form homodimers. Interacts with ULK3; inactivating the protein kinase activity of ULK3. Interacts with RAB23. Part of a DNA-bound corepressor complex containing SAP18, GLI1 and SIN3. Part of a complex containing CTNNB1. Binds BTRC, GLI2, GLI3, SAP18 and STK36. Binds both free and DNA-bound GLI1. Interacts with KIF7. Interacts with GLI3FL and this interaction regulates the formation of either repressor or activator forms of GLI3. Its association with GLI3FL is regulated by Hh signaling and dissociation of the SUFU-GLI3 interaction requires the presence of the ciliary motor KIF3A. Polyubiquitinated at Lys-257 by the SCF(FBXL17) complex, leading to its subsequent degradation and allowing the release of GLI1 for proper hedgehog/smoothened signal transduction. Ubiquitination is impaired by phosphorylation at Ser-342, Ser-346, Ser-352 and Thr-353. In terms of processing, phosphorylation at Ser-342, Ser-346, Ser-352 and Thr-353 prevents ubiquitination by the SCF(FBXL17) complex. Widely expressed in adult and fetal tissues.

Its subcellular location is the cytoplasm. The protein resides in the nucleus. Its function is as follows. Negative regulator in the hedgehog/smoothened signaling pathway. Down-regulates GLI1-mediated transactivation of target genes. Part of a corepressor complex that acts on DNA-bound GLI1. May also act by linking GLI1 to BTRC and thereby targeting GLI1 to degradation by the proteasome. Sequesters GLI1, GLI2 and GLI3 in the cytoplasm, this effect is overcome by binding of STK36 to both SUFU and a GLI protein. Negative regulator of beta-catenin signaling. Regulates the formation of either the repressor form (GLI3R) or the activator form (GLI3A) of the full-length form of GLI3 (GLI3FL). GLI3FL is complexed with SUFU in the cytoplasm and is maintained in a neutral state. Without the Hh signal, the SUFU-GLI3 complex is recruited to cilia, leading to the efficient processing of GLI3FL into GLI3R. When Hh signaling is initiated, SUFU dissociates from GLI3FL and the latter translocates to the nucleus, where it is phosphorylated, destabilized, and converted to a transcriptional activator (GLI3A). Required for normal embryonic development. Required for the proper formation of hair follicles and the control of epidermal differentiation. In Mus musculus (Mouse), this protein is Suppressor of fused homolog.